Reading from the N-terminus, the 300-residue chain is Ribosomal protein L11 methyltransferase (300 aa).

T141, G164, D186, and N233 together coordinate S-adenosyl-L-methionine.

It belongs to the methyltransferase superfamily. PrmA family.

It localises to the cytoplasm. The enzyme catalyses L-lysyl-[protein] + 3 S-adenosyl-L-methionine = N(6),N(6),N(6)-trimethyl-L-lysyl-[protein] + 3 S-adenosyl-L-homocysteine + 3 H(+). Functionally, methylates ribosomal protein L11. The polypeptide is Ribosomal protein L11 methyltransferase (Synechocystis sp. (strain ATCC 27184 / PCC 6803 / Kazusa)).